Reading from the N-terminus, the 154-residue chain is Ubiquitin-conjugating enzyme E2 L3 (154 aa).

The region spanning 2 to 149 is the UBC core domain; that stretch reads AASRRLMKEL…AEEFTKKYGE (148 aa). C86 serves as the catalytic Glycyl thioester intermediate. Residue K131 is modified to N6-acetyllysine.

This sequence belongs to the ubiquitin-conjugating enzyme family. In terms of assembly, interacts with PRKN; involved in ubiquitination and degradation of misfolded proteins. Interacts with UBE3A. Interacts with CCNB1IP1, CBL, ZAP70, RNF19A, RNF19B and RNF144B. Interacts with ARIH1. Interacts with ARIH2 (via RING-type 1). Interacts with NCOA1; they functionally interact to regulate progesterone receptor transcriptional activity. Interacts with NDFIP1 (via N-terminus); the interaction mediates recruitment of UBE2L3 to ITCH and causes MAP3K7 ubiquitination. Post-translationally, ubiquitinated. The alteration of UBE2L3 protein levels during the S-phase of the cell cycle is due to ubiquitin-dependent proteasomal degradation. Autoubiquitinated in vitro.

Its subcellular location is the nucleus. The protein localises to the cytoplasm. The enzyme catalyses S-ubiquitinyl-[E1 ubiquitin-activating enzyme]-L-cysteine + [E2 ubiquitin-conjugating enzyme]-L-cysteine = [E1 ubiquitin-activating enzyme]-L-cysteine + S-ubiquitinyl-[E2 ubiquitin-conjugating enzyme]-L-cysteine.. The protein operates within protein modification; protein ubiquitination. Ubiquitin-conjugating enzyme E2 that specifically acts with HECT-type and RBR family E3 ubiquitin-protein ligases. Does not function with most RING-containing E3 ubiquitin-protein ligases because it lacks intrinsic E3-independent reactivity with lysine: in contrast, it has activity with the RBR family E3 enzymes, such as PRKN, RNF31 and ARIH1, that function like RING-HECT hybrids. Accepts ubiquitin from the E1 complex and catalyzes its covalent attachment to other proteins. Mediates ubiquitination by the CUL9-RBX1 complex. In vitro catalyzes 'Lys-11'-linked polyubiquitination. Involved in the selective degradation of short-lived and abnormal proteins. Down-regulated during the S-phase it is involved in progression through the cell cycle. Regulates nuclear hormone receptors transcriptional activity. May play a role in myelopoiesis. This chain is Ubiquitin-conjugating enzyme E2 L3 (UBE2L3), found in Bos taurus (Bovine).